The following is a 1931-amino-acid chain: Chitin synthase 5 (1931 aa).

The Myosin motor domain occupies 11–777; sequence LGVTDLSSLA…LFRFLEDRLR (767 aa). 122 to 129 lines the ATP pocket; it reads GPTGSGKS. 3 N-linked (GlcNAc...) asparagine glycosylation sites follow: asparagine 510, asparagine 538, and asparagine 676. The actin-binding stretch occupies residues 655-677; that stretch reads VDSLLKSFDQTQTWYIFALRPND. A disordered region spans residues 798–817; sequence DPFSPHRYQPTSFDSQDHVY. Asparagine 842 carries an N-linked (GlcNAc...) asparagine glycan. 2 consecutive transmembrane segments (helical) span residues 912–932 and 951–971; these read WVWLCSILTWWIPGFLLSKIA and MIIWFICGCAIFVIAILGPVI. N-linked (GlcNAc...) asparagine glycans are attached at residues asparagine 1062, asparagine 1078, and asparagine 1146. Residues 1220–1240 form a helical membrane-spanning segment; sequence ILLALSCVMVAVIGFKFLSAL. Residue asparagine 1583 is glycosylated (N-linked (GlcNAc...) asparagine). A run of 3 helical transmembrane segments spans residues 1615-1635, 1641-1661, and 1668-1688; these read LSTIIAPVTVAYIVYLIYLIV, IPTLSIIMLAAIYGLQAMIFI, and MIAWMIFYICAIPVFSFLLPL. A disordered region spans residues 1826-1847; sequence AHRPSLDDTSSFHQPYQPAPRP. Positions 1875–1930 constitute a DEK-C domain; that stretch reads AITDSQLERSIRKICANAELDKLTKKGVRKELEREYGVELTERREAINRLVEKVLT.

In the N-terminal section; belongs to the TRAFAC class CC myosin-kinesin ATPase superfamily. Myosin family. This sequence in the C-terminal section; belongs to the chitin synthase family. Class V subfamily.

It localises to the cell membrane. It is found in the cell septum. The protein resides in the cell tip. It catalyses the reaction [(1-&gt;4)-N-acetyl-beta-D-glucosaminyl](n) + UDP-N-acetyl-alpha-D-glucosamine = [(1-&gt;4)-N-acetyl-beta-D-glucosaminyl](n+1) + UDP + H(+). Functionally, polymerizes chitin, a structural polymer of the cell wall and septum, by transferring the sugar moiety of UDP-GlcNAc to the non-reducing end of the growing chitin polymer. Produces a large proportion of the chitin that is not deacetylated to chitosan. This Cryptococcus neoformans var. grubii serotype A (strain H99 / ATCC 208821 / CBS 10515 / FGSC 9487) (Filobasidiella neoformans var. grubii) protein is Chitin synthase 5.